Reading from the N-terminus, the 631-residue chain is DNA ligase (631 aa).

NAD(+) contacts are provided by residues 37 to 41 and 79 to 80; these read DAHYD and ST. The active-site N6-AMP-lysine intermediate is the Lys115. NAD(+)-binding residues include Arg131, Glu160, and Lys272. Cys361, Cys364, Cys377, and Cys382 together coordinate Zn(2+). The region spanning 539-630 is the BRCT domain; it reads DVSSPISGKG…SQSSPEQMSL (92 aa).

The protein belongs to the NAD-dependent DNA ligase family. LigA subfamily. Mg(2+) is required as a cofactor. Mn(2+) serves as cofactor.

The enzyme catalyses NAD(+) + (deoxyribonucleotide)n-3'-hydroxyl + 5'-phospho-(deoxyribonucleotide)m = (deoxyribonucleotide)n+m + AMP + beta-nicotinamide D-nucleotide.. In terms of biological role, DNA ligase that catalyzes the formation of phosphodiester linkages between 5'-phosphoryl and 3'-hydroxyl groups in double-stranded DNA using NAD as a coenzyme and as the energy source for the reaction. It is essential for DNA replication and repair of damaged DNA. This is DNA ligase from Desulfatibacillum aliphaticivorans.